The following is a 312-amino-acid chain: MTYETDTTLMLVAVGEALVGILGNAFIALVNFMGWMKNRKIASIDLILSSVAMSRICLQCIILLDCIILVQYPDTYNRGKEMRTVDFFWTLTNHLSVWFATCLSIFYLFKIANFFHPLFLWIKWRIDKLILRTLLACVIISLCFSLPVTENLSDDFRRCVKTKERINSTLRCKVNKAGHASVKVNLNLVMLFPFSVSLVSFLLLILSLWRHTRQIQLSVTGYKDPSTTAHVKAMKAVISFLALFVVYCLAFLIATSSYFMPESELAVIWGELIALIYPSSHSFILILGSSKLKQASVRVLCRVKTMLKGKKY.

The Extracellular portion of the chain corresponds to 1–9; sequence MTYETDTTL. The chain crosses the membrane as a helical span at residues 10–30; the sequence is MLVAVGEALVGILGNAFIALV. Topologically, residues 31–49 are cytoplasmic; the sequence is NFMGWMKNRKIASIDLILS. The chain crosses the membrane as a helical span at residues 50 to 70; it reads SVAMSRICLQCIILLDCIILV. The Extracellular portion of the chain corresponds to 71 to 101; it reads QYPDTYNRGKEMRTVDFFWTLTNHLSVWFAT. A helical membrane pass occupies residues 102 to 122; the sequence is CLSIFYLFKIANFFHPLFLWI. At 123–128 the chain is on the cytoplasmic side; sequence KWRIDK. The helical transmembrane segment at 129-149 threads the bilayer; it reads LILRTLLACVIISLCFSLPVT. Residues 150–187 lie on the Extracellular side of the membrane; that stretch reads ENLSDDFRRCVKTKERINSTLRCKVNKAGHASVKVNLN. Residues Asn-151 and Asn-167 are each glycosylated (N-linked (GlcNAc...) asparagine). The chain crosses the membrane as a helical span at residues 188 to 208; sequence LVMLFPFSVSLVSFLLLILSL. The Cytoplasmic portion of the chain corresponds to 209–235; it reads WRHTRQIQLSVTGYKDPSTTAHVKAMK. The chain crosses the membrane as a helical span at residues 236–256; it reads AVISFLALFVVYCLAFLIATS. At 257–266 the chain is on the extracellular side; it reads SYFMPESELA. A helical transmembrane segment spans residues 267-287; it reads VIWGELIALIYPSSHSFILIL. Residues 288–312 are Cytoplasmic-facing; that stretch reads GSSKLKQASVRVLCRVKTMLKGKKY.

The protein belongs to the G-protein coupled receptor T2R family. Expressed in subsets of taste receptor cells of the tongue and palate epithelium and exclusively in gustducin-positive cells. Expressed in 15% taste bud cells in circumvallate and foliate papillae but only in 2% in fungiform papillae. Expressed in gastric and duodenal tissues.

It localises to the membrane. In terms of biological role, gustducin-coupled receptor implicated in the perception of bitter compounds in the oral cavity and the gastrointestinal tract. Signals through PLCB2 and the calcium-regulated cation channel TRPM5. In Mus musculus (Mouse), this protein is Taste receptor type 2 member 7 (Tas2r7).